Here is a 132-residue protein sequence, read N- to C-terminus: Small ribosomal subunit protein uS8 (132 aa).

This sequence belongs to the universal ribosomal protein uS8 family. In terms of assembly, part of the 30S ribosomal subunit. Contacts proteins S5 and S12.

Its function is as follows. One of the primary rRNA binding proteins, it binds directly to 16S rRNA central domain where it helps coordinate assembly of the platform of the 30S subunit. This Rickettsia akari (strain Hartford) protein is Small ribosomal subunit protein uS8.